A 152-amino-acid polypeptide reads, in one-letter code: Small ribosomal subunit protein uS19x (152 aa).

Belongs to the universal ribosomal protein uS19 family.

The protein resides in the cytoplasm. In Arabidopsis thaliana (Mouse-ear cress), this protein is Small ribosomal subunit protein uS19x (RPS15D).